Reading from the N-terminus, the 699-residue chain is tRNA 5-methylaminomethyl-2-thiouridine biosynthesis bifunctional protein MnmC (699 aa).

The interval 1–260 is tRNA (mnm(5)s(2)U34)-methyltransferase; the sequence is MTAKPHISCQ…ERKLLRQQAN (260 aa). The interval 282–699 is FAD-dependent cmnm(5)s(2)U34 oxidoreductase; it reads IGGGLASAHL…LRKLLKGKAL (418 aa).

In the N-terminal section; belongs to the methyltransferase superfamily. tRNA (mnm(5)s(2)U34)-methyltransferase family. The protein in the C-terminal section; belongs to the DAO family. The cofactor is FAD.

It localises to the cytoplasm. The enzyme catalyses 5-aminomethyl-2-thiouridine(34) in tRNA + S-adenosyl-L-methionine = 5-methylaminomethyl-2-thiouridine(34) in tRNA + S-adenosyl-L-homocysteine + H(+). In terms of biological role, catalyzes the last two steps in the biosynthesis of 5-methylaminomethyl-2-thiouridine (mnm(5)s(2)U) at the wobble position (U34) in tRNA. Catalyzes the FAD-dependent demodification of cmnm(5)s(2)U34 to nm(5)s(2)U34, followed by the transfer of a methyl group from S-adenosyl-L-methionine to nm(5)s(2)U34, to form mnm(5)s(2)U34. The polypeptide is tRNA 5-methylaminomethyl-2-thiouridine biosynthesis bifunctional protein MnmC (Shewanella oneidensis (strain ATCC 700550 / JCM 31522 / CIP 106686 / LMG 19005 / NCIMB 14063 / MR-1)).